A 122-amino-acid polypeptide reads, in one-letter code: Large ribosomal subunit protein uL14c (122 aa).

The protein belongs to the universal ribosomal protein uL14 family. In terms of assembly, part of the 50S ribosomal subunit.

It localises to the plastid. Its subcellular location is the chloroplast. In terms of biological role, binds to 23S rRNA. The chain is Large ribosomal subunit protein uL14c from Nicotiana tomentosiformis (Tobacco).